Consider the following 331-residue polypeptide: Geranylgeranyl pyrophosphate synthase dpmaD (331 aa).

Lysine 53, arginine 56, and histidine 85 together coordinate isopentenyl diphosphate. Residues aspartate 92 and aspartate 96 each contribute to the Mg(2+) site. Arginine 101 lines the dimethylallyl diphosphate pocket. Arginine 102 is a binding site for isopentenyl diphosphate. Lysine 179, threonine 180, and glutamine 213 together coordinate dimethylallyl diphosphate. A Mg(2+)-binding site is contributed by aspartate 216. Positions 220, 230, and 240 each coordinate dimethylallyl diphosphate.

Belongs to the FPP/GGPP synthase family. Requires Mg(2+) as cofactor.

The catalysed reaction is isopentenyl diphosphate + dimethylallyl diphosphate = (2E)-geranyl diphosphate + diphosphate. It catalyses the reaction isopentenyl diphosphate + (2E)-geranyl diphosphate = (2E,6E)-farnesyl diphosphate + diphosphate. It carries out the reaction isopentenyl diphosphate + (2E,6E)-farnesyl diphosphate = (2E,6E,10E)-geranylgeranyl diphosphate + diphosphate. Its pathway is secondary metabolite biosynthesis; terpenoid biosynthesis. Its function is as follows. Geranylgeranyl pyrophosphate synthase; part of the gene cluster that mediates the biosynthesis of the diterpenoid pyrones subglutinols A and B. The first step of the pathway is the synthesis of the alpha-pyrone moiety by the polyketide synthase dpmaA via condensation of one acetyl-CoA starter unit with 3 malonyl-CoA units and 2 methylations. The alpha-pyrone is then combined with geranylgeranyl pyrophosphate (GGPP) formed by the GGPP synthase dpmaD through the action of the prenyltransferase dpmaC to yield a linear alpha-pyrone diterpenoid. Subsequent steps in the diterpenoid pyrone biosynthetic pathway involve the decalin core formation, which is initiated by the epoxidation of the C10-C11 olefin by the FAD-dependent oxidoreductase dpmaE, and is followed by a cyclization cascade catalyzed by the terpene cyclase dpmaB. The dehydrogenase dpmaF is then involved in tetrahydrofuran (THF) ring formation at the C5 unit to complete the formation of subglutinols A and B. This is Geranylgeranyl pyrophosphate synthase dpmaD from Metarhizium anisopliae (Entomophthora anisopliae).